The primary structure comprises 236 residues: MSETFIQERLDSLYEIDCKIVSLLDNISTLFQTYSSSDGDVKESFASQTEEIYSILSKVAIDLRKEVKVMDDNIGVYDKNKDGVMILPIGVDQKNTTLGRKKLNEELKELEGLLPPVSKSNEEDISMADAEQSVEIEKNAEEDKTQVKKEAVQESITEPEKSNQSTNEETKETQPDQIESKDDIKQETPFNEINIPKESTSEPELGLGADIDIDMDNNDNNNDDNSNVDDLFEDIL.

2 stretches are compositionally biased toward basic and acidic residues: residues 136-152 and 168-186; these read IEKNAEEDKTQVKKEAV and EETKETQPDQIESKDDIKQ. The tract at residues 136-236 is disordered; it reads IEKNAEEDKT…NVDDLFEDIL (101 aa). The span at 226-236 shows a compositional bias: acidic residues; that stretch reads SNVDDLFEDIL.

The protein belongs to the Mediator complex subunit 11 family. Component of the Mediator complex.

It is found in the nucleus. Its function is as follows. Component of the Mediator complex, a coactivator involved in the regulated transcription of nearly all RNA polymerase II-dependent genes. Mediator functions as a bridge to convey information from gene-specific regulatory proteins to the basal RNA polymerase II transcription machinery. Mediator is recruited to promoters by direct interactions with regulatory proteins and serves as a scaffold for the assembly of a functional pre-initiation complex with RNA polymerase II and the general transcription factors. The chain is Mediator of RNA polymerase II transcription subunit 11 (MED11) from Scheffersomyces stipitis (strain ATCC 58785 / CBS 6054 / NBRC 10063 / NRRL Y-11545) (Yeast).